The sequence spans 119 residues: Large ribosomal subunit protein bL20 (119 aa).

This sequence belongs to the bacterial ribosomal protein bL20 family.

Functionally, binds directly to 23S ribosomal RNA and is necessary for the in vitro assembly process of the 50S ribosomal subunit. It is not involved in the protein synthesizing functions of that subunit. The protein is Large ribosomal subunit protein bL20 of Xylella fastidiosa (strain M12).